We begin with the raw amino-acid sequence, 821 residues long: DNA replication licensing factor MCM6 (821 aa).

N-acetylmethionine is present on Met1. Residues Ser13, Ser219, and Ser271 each carry the phosphoserine modification. Phosphothreonine is present on Thr278. The region spanning 346-553 is the MCM domain; the sequence is LYHNLCTSLF…TDYAIARRIV (208 aa). ATP is bound by residues His359, Ser399, Thr400, Ala401, Lys402, Ser403, and Asn504. The Arginine finger signature appears at 528–531; that stretch reads SRFD. ADP is bound by residues Arg619 and Glu622. Lys643 carries the N6-acetyllysine modification. Positions 676–708 are disordered; it reads TDEGQGGVNGHADSPAPVNRFNGSSEDASQETV. Residues Ser689, Ser704, and Ser762 each carry the phosphoserine modification. Polar residues predominate over residues 696-708; it reads FNGSSEDASQETV. Position 791 is a phosphothreonine (Thr791).

Belongs to the MCM family. In terms of assembly, component of the MCM2-7 complex. The complex forms a toroidal hexameric ring with the proposed subunit order MCM2-MCM6-MCM4-MCM7-MCM3-MCM5. Component of the CMG helicase complex, a hexameric ring of related MCM2-7 subunits stabilized by CDC45 and the tetrameric GINS complex. May interact with MCM10. Interacts with TIPIN. Interacts with CDT1. Interacts with MCMBP. Interacts with DDI2. In terms of processing, O-glycosylated (O-GlcNAcylated), in a cell cycle-dependent manner.

The protein localises to the nucleus. Its subcellular location is the chromosome. It catalyses the reaction ATP + H2O = ADP + phosphate + H(+). Functionally, acts as a component of the MCM2-7 complex (MCM complex) which is the replicative helicase essential for 'once per cell cycle' DNA replication initiation and elongation in eukaryotic cells. Core component of CDC45-MCM-GINS (CMG) helicase, the molecular machine that unwinds template DNA during replication, and around which the replisome is built. The active ATPase sites in the MCM2-7 ring are formed through the interaction surfaces of two neighboring subunits such that a critical structure of a conserved arginine finger motif is provided in trans relative to the ATP-binding site of the Walker A box of the adjacent subunit. The six ATPase active sites, however, are likely to contribute differentially to the complex helicase activity. In Mus musculus (Mouse), this protein is DNA replication licensing factor MCM6 (Mcm6).